Here is a 95-residue protein sequence, read N- to C-terminus: Co-chaperonin GroES (95 aa).

Belongs to the GroES chaperonin family. In terms of assembly, heptamer of 7 subunits arranged in a ring. Interacts with the chaperonin GroEL.

The protein resides in the cytoplasm. Functionally, together with the chaperonin GroEL, plays an essential role in assisting protein folding. The GroEL-GroES system forms a nano-cage that allows encapsulation of the non-native substrate proteins and provides a physical environment optimized to promote and accelerate protein folding. GroES binds to the apical surface of the GroEL ring, thereby capping the opening of the GroEL channel. The chain is Co-chaperonin GroES from Glaesserella parasuis serovar 5 (strain SH0165) (Haemophilus parasuis).